A 492-amino-acid polypeptide reads, in one-letter code: Transcription factor IIIB 60 kDa subunit (492 aa).

The TFIIB-type zinc finger occupies 1 to 30; sequence MGCPNCGSTTFESDTASGNTYCTQCGVVVE. Zn(2+) is bound by residues Cys3, Cys6, Cys22, and Cys25. The disordered stretch occupies residues 440–468; it reads QPRKRRRYRPRDSTSDGIADTAAESAKEM.

This sequence belongs to the TFIIB family. As to quaternary structure, TFIIIB comprises the TATA-binding protein (TBP), the B-related factor (BRF) and a third subunit (Potential). Interacts with maf1.

It is found in the nucleus. General activator of RNA polymerase III transcription. The sequence is that of Transcription factor IIIB 60 kDa subunit (brf1) from Schizosaccharomyces pombe (strain 972 / ATCC 24843) (Fission yeast).